Consider the following 531-residue polypeptide: Protein SIS2 (531 aa).

The segment covering 1–20 (MPSDKDIKSPAQPKKEEEIP) has biased composition (basic and acidic residues). Disordered stretches follow at residues 1–42 (MPSD…ANII), 88–127 (SPDS…KSPS), 139–168 (RPVR…EPSS), 180–261 (SLRA…DPRL), and 461–531 (YPED…TTNL). A compositionally biased stretch (polar residues) spans 155 to 168 (LTPITSPQHSEPSS). Residues 183–198 (ATTNSISSAAASNQST) show a composition bias toward low complexity. Over residues 204–213 (SGGGGGGGGA) the composition is skewed to gly residues. Residues 214–249 (NTATSSNSTTSNTALAAQGTTTTTTTTNSNSNTTTT) are compositionally biased toward low complexity. Acidic residues-rich tracts occupy residues 462 to 472 (PEDEDEDEADD) and 481 to 514 (AIID…EEDP).

The protein belongs to the HFCD (homooligomeric flavin containing Cys decarboxylase) superfamily.

The protein resides in the nucleus. Its subcellular location is the cytoplasm. May stimulate expression of certain genes that are periodically expressed during late G1. Also modulates the expression of the ENA1 ATPase. The chain is Protein SIS2 (SIS2) from Candida tropicalis (Yeast).